Here is a 95-residue protein sequence, read N- to C-terminus: MKNPRDILIKPVVTEKSTGLLAENKYTFIVDLNANKTEVKKAVEEIFKVKVEKVNTMRVKGKLKRVRQFTGKTPDRKKAIVTLKEGDKIEIFEGL.

It belongs to the universal ribosomal protein uL23 family. Part of the 50S ribosomal subunit. Contacts protein L29, and trigger factor when it is bound to the ribosome.

Its function is as follows. One of the early assembly proteins it binds 23S rRNA. One of the proteins that surrounds the polypeptide exit tunnel on the outside of the ribosome. Forms the main docking site for trigger factor binding to the ribosome. The polypeptide is Large ribosomal subunit protein uL23 (Desulforamulus reducens (strain ATCC BAA-1160 / DSM 100696 / MI-1) (Desulfotomaculum reducens)).